Here is a 193-residue protein sequence, read N- to C-terminus: Alpha-S2-casein (193 aa).

Residues 1-15 (MKFFIFTCLLAVVLA) form the signal peptide. Ser23, Ser24, Ser25, Ser28, Ser47, Ser68, Ser123, Ser125, Ser128, and Ser136 each carry phosphoserine.

It belongs to the alpha-casein family. As to expression, mammary gland specific. Secreted in milk.

The protein resides in the secreted. Important role in the capacity of milk to transport calcium phosphate. This Camelus dromedarius (Dromedary) protein is Alpha-S2-casein (CSN1S2).